A 258-amino-acid polypeptide reads, in one-letter code: Pyridoxal phosphate homeostasis protein (258 aa).

Lys-47 is modified (N6-(pyridoxal phosphate)lysine).

It belongs to the pyridoxal phosphate-binding protein YggS/PROSC family.

Its function is as follows. Pyridoxal 5'-phosphate (PLP)-binding protein, which is involved in PLP homeostasis. In Mycobacterium bovis (strain ATCC BAA-935 / AF2122/97), this protein is Pyridoxal phosphate homeostasis protein.